The chain runs to 222 residues: Probable transaldolase (222 aa).

The Schiff-base intermediate with substrate role is filled by K91.

It belongs to the transaldolase family. Type 3B subfamily.

Its subcellular location is the cytoplasm. It catalyses the reaction D-sedoheptulose 7-phosphate + D-glyceraldehyde 3-phosphate = D-erythrose 4-phosphate + beta-D-fructose 6-phosphate. It participates in carbohydrate degradation; pentose phosphate pathway; D-glyceraldehyde 3-phosphate and beta-D-fructose 6-phosphate from D-ribose 5-phosphate and D-xylulose 5-phosphate (non-oxidative stage): step 2/3. In terms of biological role, transaldolase is important for the balance of metabolites in the pentose-phosphate pathway. This is Probable transaldolase from Chlorobium chlorochromatii (strain CaD3).